A 541-amino-acid polypeptide reads, in one-letter code: GTPase Obg (541 aa).

Positions 2 to 159 (PTFVDRVVLH…LDAVLELKSV (158 aa)) constitute an Obg domain. The disordered stretch occupies residues 63 to 84 (HPHQRAGGGRPGQGSNRHGADG). An OBG-type G domain is found at 160–332 (ADVALVGFPS…LALALAELVA (173 aa)). Residues 166–173 (GFPSAGKS), 191–195 (FTTLV), 213–216 (DVPG), 284–287 (NKVD), and 313–315 (STA) contribute to the GTP site. Residues serine 173 and threonine 193 each contribute to the Mg(2+) site. Residues 350 to 427 (PRAVDEPDFT…IGAVTFDWEP (78 aa)) enclose the OCT domain. Residues 497-541 (KRLTRAQRTALSDSADDFDDGAGFSDSAAFGDSGGSGGDADGGRG) form a disordered region. The span at 517-527 (GAGFSDSAAFG) shows a compositional bias: low complexity. A compositionally biased stretch (gly residues) spans 528 to 541 (DSGGSGGDADGGRG).

This sequence belongs to the TRAFAC class OBG-HflX-like GTPase superfamily. OBG GTPase family. As to quaternary structure, monomer. Requires Mg(2+) as cofactor.

The protein localises to the cytoplasm. Functionally, an essential GTPase which binds GTP, GDP and possibly (p)ppGpp with moderate affinity, with high nucleotide exchange rates and a fairly low GTP hydrolysis rate. Plays a role in control of the cell cycle, stress response, ribosome biogenesis and in those bacteria that undergo differentiation, in morphogenesis control. The protein is GTPase Obg of Parafrankia sp. (strain EAN1pec).